We begin with the raw amino-acid sequence, 696 residues long: Elongation factor G (696 aa).

One can recognise a tr-type G domain in the interval 8 to 282 (KDYRNIGIMA…AVVDYLPSPL (275 aa)). GTP contacts are provided by residues 17 to 24 (AHIDAGKT), 81 to 85 (DTPGH), and 135 to 138 (NKMD).

The protein belongs to the TRAFAC class translation factor GTPase superfamily. Classic translation factor GTPase family. EF-G/EF-2 subfamily.

It is found in the cytoplasm. Catalyzes the GTP-dependent ribosomal translocation step during translation elongation. During this step, the ribosome changes from the pre-translocational (PRE) to the post-translocational (POST) state as the newly formed A-site-bound peptidyl-tRNA and P-site-bound deacylated tRNA move to the P and E sites, respectively. Catalyzes the coordinated movement of the two tRNA molecules, the mRNA and conformational changes in the ribosome. The polypeptide is Elongation factor G (Mycoplasmopsis synoviae (strain 53) (Mycoplasma synoviae)).